The chain runs to 237 residues: Ribose-5-phosphate isomerase A (237 aa).

Substrate is bound by residues 28–31 (SGST), 83–86 (DGAD), and 97–100 (KGRG). Glutamate 106 (proton acceptor) is an active-site residue. Position 124 (lysine 124) interacts with substrate.

This sequence belongs to the ribose 5-phosphate isomerase family. In terms of assembly, homodimer.

It catalyses the reaction aldehydo-D-ribose 5-phosphate = D-ribulose 5-phosphate. The protein operates within carbohydrate degradation; pentose phosphate pathway; D-ribose 5-phosphate from D-ribulose 5-phosphate (non-oxidative stage): step 1/1. Catalyzes the reversible conversion of ribose-5-phosphate to ribulose 5-phosphate. This is Ribose-5-phosphate isomerase A from Thermomicrobium roseum (strain ATCC 27502 / DSM 5159 / P-2).